Reading from the N-terminus, the 375-residue chain is Superinfection exclusion protein (375 aa).

The first 15 residues, 1–15 (MIALLILSLACSVSA), serve as a signal peptide directing secretion.

This sequence belongs to the serpin family. Orthopoxvirus OPG040 subfamily. As to quaternary structure, interacts with OPG185/A56 protein.

The protein resides in the virion membrane. Its subcellular location is the host cell membrane. Functionally, negatively regulates superinfection and syncytium formation in infected host cells. Acts in concert with OPG185/A56 protein at the host cell membrane by interacting with and inhibiting the mature virion entry/fusion complex (EFC). This mechanism ensures that new virions released from the cell cannot enter already infected cells. This Cynomys gunnisoni (Gunnison's prairie dog) protein is Superinfection exclusion protein (OPG040).